The primary structure comprises 261 residues: Triosephosphate isomerase (261 aa).

10-12 contacts substrate; that stretch reads NWK. His-100 functions as the Electrophile in the catalytic mechanism. Glu-172 functions as the Proton acceptor in the catalytic mechanism. Residues Gly-178, Ser-218, and 239–240 contribute to the substrate site; that span reads GG.

This sequence belongs to the triosephosphate isomerase family. As to quaternary structure, homodimer.

The protein localises to the cytoplasm. The catalysed reaction is D-glyceraldehyde 3-phosphate = dihydroxyacetone phosphate. It participates in carbohydrate biosynthesis; gluconeogenesis. Its pathway is carbohydrate degradation; glycolysis; D-glyceraldehyde 3-phosphate from glycerone phosphate: step 1/1. Functionally, involved in the gluconeogenesis. Catalyzes stereospecifically the conversion of dihydroxyacetone phosphate (DHAP) to D-glyceraldehyde-3-phosphate (G3P). The protein is Triosephosphate isomerase of Mycobacterium tuberculosis (strain CDC 1551 / Oshkosh).